Here is a 374-residue protein sequence, read N- to C-terminus: RNA polymerase sigma factor SigA (374 aa).

The tract at residues 141–211 (LAEANLRLVV…TRAIADQART (71 aa)) is sigma-70 factor domain-2. The Interaction with polymerase core subunit RpoC signature appears at 165–168 (DLIQ). The sigma-70 factor domain-3 stretch occupies residues 220 to 296 (ETINKLIRVQ…DQDATSPSDH (77 aa)). The segment at 309-362 (VLDTLTDREENVLRLRFGLDDGRTRTLEEVGRVFGVTRERIRQIEAKALRKLRH) is sigma-70 factor domain-4. Positions 335 to 354 (LEEVGRVFGVTRERIRQIEA) form a DNA-binding region, H-T-H motif.

It belongs to the sigma-70 factor family. RpoD/SigA subfamily. Interacts transiently with the RNA polymerase catalytic core.

The protein resides in the cytoplasm. Its function is as follows. Sigma factors are initiation factors that promote the attachment of RNA polymerase to specific initiation sites and are then released. This sigma factor is the primary sigma factor during exponential growth. In Listeria innocua serovar 6a (strain ATCC BAA-680 / CLIP 11262), this protein is RNA polymerase sigma factor SigA.